A 62-amino-acid chain; its full sequence is Conorfamide-Tx1 (62 aa).

The N-terminal stretch at 1–19 is a signal peptide; it reads MSGRGFLLLALLLLVTVEA. The propeptide occupies 20–26; that stretch reads TKVEKNK. Tyr46 is subject to Tyrosine amide. A propeptide spanning residues 47-62 is cleaved from the precursor; the sequence is GRRDMQSPLLSERLRF.

Belongs to the FARP (FMRFamide related peptide) family. As to expression, expressed by the venom duct.

Its subcellular location is the secreted. Its function is as follows. This peptide does not show activity on human and mouse sensory neuron-specific G-protein coupled receptors MRGPRX1. This chain is Conorfamide-Tx1, found in Conus textile (Cloth-of-gold cone).